The following is a 258-amino-acid chain: Imidazole glycerol phosphate synthase subunit HisF (258 aa).

Active-site residues include Asp11 and Asp130.

It belongs to the HisA/HisF family. As to quaternary structure, heterodimer of HisH and HisF.

It localises to the cytoplasm. It carries out the reaction 5-[(5-phospho-1-deoxy-D-ribulos-1-ylimino)methylamino]-1-(5-phospho-beta-D-ribosyl)imidazole-4-carboxamide + L-glutamine = D-erythro-1-(imidazol-4-yl)glycerol 3-phosphate + 5-amino-1-(5-phospho-beta-D-ribosyl)imidazole-4-carboxamide + L-glutamate + H(+). Its pathway is amino-acid biosynthesis; L-histidine biosynthesis; L-histidine from 5-phospho-alpha-D-ribose 1-diphosphate: step 5/9. Functionally, IGPS catalyzes the conversion of PRFAR and glutamine to IGP, AICAR and glutamate. The HisF subunit catalyzes the cyclization activity that produces IGP and AICAR from PRFAR using the ammonia provided by the HisH subunit. This Escherichia coli O1:K1 / APEC protein is Imidazole glycerol phosphate synthase subunit HisF.